The chain runs to 321 residues: Urease accessory protein UreD (321 aa).

Belongs to the UreD family. In terms of assembly, ureD, UreF and UreG form a complex that acts as a GTP-hydrolysis-dependent molecular chaperone, activating the urease apoprotein by helping to assemble the nickel containing metallocenter of UreC. The UreE protein probably delivers the nickel.

It localises to the cytoplasm. In terms of biological role, required for maturation of urease via the functional incorporation of the urease nickel metallocenter. This Yersinia pseudotuberculosis serotype O:1b (strain IP 31758) protein is Urease accessory protein UreD.